Consider the following 269-residue polypeptide: tRNA pseudouridine synthase A (269 aa).

Aspartate 55 acts as the Nucleophile in catalysis. Tyrosine 111 lines the substrate pocket.

Belongs to the tRNA pseudouridine synthase TruA family.

It carries out the reaction uridine(38/39/40) in tRNA = pseudouridine(38/39/40) in tRNA. Its function is as follows. Formation of pseudouridine at positions 38, 39 and 40 in the anticodon stem and loop of transfer RNAs. The polypeptide is tRNA pseudouridine synthase A (Methanosarcina mazei (strain ATCC BAA-159 / DSM 3647 / Goe1 / Go1 / JCM 11833 / OCM 88) (Methanosarcina frisia)).